A 104-amino-acid chain; its full sequence is Thiosulfate sulfurtransferase PspE (104 aa).

Residues 1 to 19 form the signal peptide; it reads MFKKGLLALALVFSLPVFA. The Rhodanese domain occupies 20 to 104; the sequence is AEHWIDVRVP…KDIAMPKVKG (85 aa). Cysteine 67 acts as the Cysteine persulfide intermediate in catalysis.

Monomer.

Its subcellular location is the periplasm. It carries out the reaction thiosulfate + hydrogen cyanide = thiocyanate + sulfite + 2 H(+). Inhibited by thiosulfate above 100 mM, particularly at low cyanide concentrations (&lt;5 mM). Inhibited by sodium sulfate or sodium chloride at 0.25 M which gives around 50% inhibition of rhodanese activity. Addition of sodium phosphate at the same concentration results in about 65% inhibition. Sulfite strongly inhibits PspE activity (1 mM sodium sulfite resulted in more than 50% inhibition of rhodanese activity). Its function is as follows. The phage shock protein (psp) operon (pspABCDE) may play a significant role in the competition for survival under nutrient- or energy-limited conditions. PspE catalyzes the sulfur-transfer reaction from thiosulfate to cyanide, to form sulfite and thiocyanate. Also able to use dithiol (dithiothreitol) as an alternate sulfur acceptor. Also possesses a very low mercaptopyruvate sulfurtransferase activity. The chain is Thiosulfate sulfurtransferase PspE (pspE) from Escherichia coli (strain K12).